The primary structure comprises 662 residues: Glutathione hydrolase 7 (662 aa).

Topologically, residues 1 to 106 are cytoplasmic; the sequence is MAAENEASQE…AAECSCRQDG (106 aa). Phosphoserine is present on residues S17, S72, S79, and S83. Positions 26–90 are disordered; it reads SFPRLPEDEP…DGSPLRETRK (65 aa). Residues 72–83 show a composition bias toward low complexity; that stretch reads SSSSEMGSQDGS. A helical; Signal-anchor for type II membrane protein transmembrane segment spans residues 107–127; sequence LTVIVTACLTFATGVTVALVM. Over 128 to 662 the chain is Extracellular; sequence QIYFGDPQIF…SPDAAGATIL (535 aa). 10 N-linked (GlcNAc...) asparagine glycosylation sites follow: N198, N267, N283, N330, N353, N394, N452, N519, N523, and N586.

It belongs to the gamma-glutamyltransferase family. In terms of assembly, interacts with TLCD3A. Heterodimer composed of the light and heavy chains. The active site is located in the light chain. Cleaved by autocatalysis into a large and a small subunit and the autocatalytic cleavage is essential to the functional activation of the enzyme. As to expression, widely expressed, but at low level, except in the airway epithelial cells. Detected in brain, heart, kidney, liver, lung, spleen, testis and trachea.

The protein localises to the membrane. It carries out the reaction an N-terminal (5-L-glutamyl)-[peptide] + an alpha-amino acid = 5-L-glutamyl amino acid + an N-terminal L-alpha-aminoacyl-[peptide]. It catalyses the reaction glutathione + H2O = L-cysteinylglycine + L-glutamate. The catalysed reaction is an S-substituted glutathione + H2O = an S-substituted L-cysteinylglycine + L-glutamate. It participates in sulfur metabolism; glutathione metabolism. Hydrolyzes and transfers gamma-glutamyl moieties from glutathione and other gamma-glutamyl compounds to acceptors. This Homo sapiens (Human) protein is Glutathione hydrolase 7.